Consider the following 728-residue polypeptide: Phosphoribosylformylglycinamidine synthase subunit PurL (728 aa).

Residue histidine 40 is part of the active site. ATP is bound by residues tyrosine 43 and lysine 82. Glutamate 84 contributes to the Mg(2+) binding site. Substrate contacts are provided by residues 85-88 and arginine 107; that span reads SHNH. Residue histidine 86 is the Proton acceptor of the active site. Mg(2+) is bound at residue aspartate 108. Glutamine 231 provides a ligand contact to substrate. Aspartate 259 contacts Mg(2+). 303–305 is a binding site for substrate; it reads ESQ. The ATP site is built by asparagine 483 and glycine 520. Asparagine 521 is a Mg(2+) binding site. A substrate-binding site is contributed by serine 523.

This sequence belongs to the FGAMS family. As to quaternary structure, monomer. Part of the FGAM synthase complex composed of 1 PurL, 1 PurQ and 2 PurS subunits.

Its subcellular location is the cytoplasm. It catalyses the reaction N(2)-formyl-N(1)-(5-phospho-beta-D-ribosyl)glycinamide + L-glutamine + ATP + H2O = 2-formamido-N(1)-(5-O-phospho-beta-D-ribosyl)acetamidine + L-glutamate + ADP + phosphate + H(+). It functions in the pathway purine metabolism; IMP biosynthesis via de novo pathway; 5-amino-1-(5-phospho-D-ribosyl)imidazole from N(2)-formyl-N(1)-(5-phospho-D-ribosyl)glycinamide: step 1/2. In terms of biological role, part of the phosphoribosylformylglycinamidine synthase complex involved in the purines biosynthetic pathway. Catalyzes the ATP-dependent conversion of formylglycinamide ribonucleotide (FGAR) and glutamine to yield formylglycinamidine ribonucleotide (FGAM) and glutamate. The FGAM synthase complex is composed of three subunits. PurQ produces an ammonia molecule by converting glutamine to glutamate. PurL transfers the ammonia molecule to FGAR to form FGAM in an ATP-dependent manner. PurS interacts with PurQ and PurL and is thought to assist in the transfer of the ammonia molecule from PurQ to PurL. This is Phosphoribosylformylglycinamidine synthase subunit PurL from Carboxydothermus hydrogenoformans (strain ATCC BAA-161 / DSM 6008 / Z-2901).